A 375-amino-acid polypeptide reads, in one-letter code: MSTAGKVIKCKAAVLWEVKKPFSIEDVEVAPPKAYEVRIKMVAVGICRTDDHVVSGNLVTPLPAILGHEAAGIVESVGEGVTTVKPGDKVIPLFTPQCGKCRVCKNPESNYCLKNDLGNPRGTLQDGTRRFTCRGKPIHHFLGTSTFSQYTVVDENAVAKIDAASPLEKVCLIGCGFSTGYGSAVNVAKVTPGSTCAVFGLGGVGLSAVMGCKAAGAARIIAVDINKDKFAKAKELGATECINPQDYKKPIQEVLKEMTDGGVDFSFEVIGRLDTMMASLLCCHEACGTSVIVGVPPASQNLSINPMLLLTGRTWKGAVYGGFKSKEGIPKLVADFMAKKFSLDALITHVLPFEKINEGFDLLHSGKSIRTVLTF.

Ser2 is modified (N-acetylserine). Position 23 is a phosphoserine (Ser23). Tyr35 is subject to Phosphotyrosine. Zn(2+) is bound by residues Cys47, His68, Cys98, Cys101, Cys104, Cys112, and Cys175. Residues 200 to 205 (GLGGVG), Asp224, Lys229, 293 to 295 (VGV), and Arg370 contribute to the NAD(+) site.

This sequence belongs to the zinc-containing alcohol dehydrogenase family. In terms of assembly, homodimer or heterodimer of closely related subunits. It depends on Zn(2+) as a cofactor.

The protein localises to the cytoplasm. It catalyses the reaction all-trans-retinol + NAD(+) = all-trans-retinal + NADH + H(+). The enzyme catalyses all-trans-4-hydroxyretinol + NAD(+) = all-trans-4-hydroxyretinal + NADH + H(+). The catalysed reaction is all-trans-4-oxoretinol + NAD(+) = all-trans-4-oxoretinal + NADH + H(+). Catalyzes the NAD-dependent oxidation of all-trans-retinol and its derivatives such as all-trans-4-hydroxyretinol and may participate in retinoid metabolism. In vitro can also catalyze the NADH-dependent reduction of all-trans-retinal and its derivatives such as all-trans-4-oxoretinal. Catalyzes in the oxidative direction with higher efficiency. Has the same affinity for all-trans-4-hydroxyretinol and all-trans-4-oxoretinal. This Pan troglodytes (Chimpanzee) protein is All-trans-retinol dehydrogenase [NAD(+)] ADH1B.